The sequence spans 400 residues: Elongation factor Tu (400 aa).

The tr-type G domain maps to 10–210; sequence KPHINVGTIG…ALDEYIPEPK (201 aa). Positions 19–26 are G1; sequence GHVDHGKT. Position 19–26 (19–26) interacts with GTP; that stretch reads GHVDHGKT. Residue Thr-26 coordinates Mg(2+). Residues 64-68 form a G2 region; it reads GITIA. Positions 85 to 88 are G3; it reads DCPG. GTP is bound by residues 85–89 and 140–143; these read DCPGH and NKAD. The G4 stretch occupies residues 140–143; sequence NKAD. Residues 178–180 form a G5 region; sequence SAL.

The protein belongs to the TRAFAC class translation factor GTPase superfamily. Classic translation factor GTPase family. EF-Tu/EF-1A subfamily. As to quaternary structure, monomer.

It is found in the cytoplasm. The enzyme catalyses GTP + H2O = GDP + phosphate + H(+). Functionally, GTP hydrolase that promotes the GTP-dependent binding of aminoacyl-tRNA to the A-site of ribosomes during protein biosynthesis. This chain is Elongation factor Tu, found in Rubrobacter xylanophilus (strain DSM 9941 / JCM 11954 / NBRC 16129 / PRD-1).